Consider the following 413-residue polypeptide: Multifunctional CCA protein (413 aa).

Glycine 8 and arginine 11 together coordinate ATP. Glycine 8 and arginine 11 together coordinate CTP. Mg(2+) is bound by residues aspartate 21 and aspartate 23. Residues arginine 91, arginine 143, and arginine 146 each contribute to the ATP site. The CTP site is built by arginine 91, arginine 143, and arginine 146. Residues 232–333 enclose the HD domain; it reads TGVHVMMVVD…VRLFERSDAL (102 aa).

The protein belongs to the tRNA nucleotidyltransferase/poly(A) polymerase family. Bacterial CCA-adding enzyme type 1 subfamily. Monomer. Can also form homodimers and oligomers. Requires Mg(2+) as cofactor. Ni(2+) serves as cofactor.

It catalyses the reaction a tRNA precursor + 2 CTP + ATP = a tRNA with a 3' CCA end + 3 diphosphate. The catalysed reaction is a tRNA with a 3' CCA end + 2 CTP + ATP = a tRNA with a 3' CCACCA end + 3 diphosphate. Functionally, catalyzes the addition and repair of the essential 3'-terminal CCA sequence in tRNAs without using a nucleic acid template. Adds these three nucleotides in the order of C, C, and A to the tRNA nucleotide-73, using CTP and ATP as substrates and producing inorganic pyrophosphate. tRNA 3'-terminal CCA addition is required both for tRNA processing and repair. Also involved in tRNA surveillance by mediating tandem CCA addition to generate a CCACCA at the 3' terminus of unstable tRNAs. While stable tRNAs receive only 3'-terminal CCA, unstable tRNAs are marked with CCACCA and rapidly degraded. This chain is Multifunctional CCA protein, found in Burkholderia cenocepacia (strain HI2424).